We begin with the raw amino-acid sequence, 251 residues long: MNILITNDDGINARGIKTLAEKMSKKHNVTIVAPREQKSASSHSISINIPIKIREEKIDGLDCKAYSLVGTPADCTQAGISLLVKDIDLVISGINRGFNSGTDILYSGTVSAAIEGAIYDVPSIAISMDVKWDRDDEDYSKAANWVNKVVDLAEKKYLKKNVVLNVNVPNINEEDIKGLKVCKIGKSTYKTEYVLLEEDNDKVYQTRGVRNQVEKDESDLYFLSQGYVTLTPLHFDFTNFKELNEVKKIFE.

4 residues coordinate a divalent metal cation: Asp-8, Asp-9, Ser-39, and Asn-95.

Belongs to the SurE nucleotidase family. It depends on a divalent metal cation as a cofactor.

The protein localises to the cytoplasm. The enzyme catalyses a ribonucleoside 5'-phosphate + H2O = a ribonucleoside + phosphate. Nucleotidase that shows phosphatase activity on nucleoside 5'-monophosphates. The protein is 5'-nucleotidase SurE of Clostridium botulinum (strain Alaska E43 / Type E3).